Here is a 375-residue protein sequence, read N- to C-terminus: MVAPEGLREMEGSALRRLVGREEASGGRCLLLDCRPFLAHSAGHIRGALNVRCNTIVRRRAKGAVSLEQILPAEGEVRARLRAGLYTAVVLYDERSPRAEALRDDSTVALVLRALRRDMARADIRLLAGGYERFASEYPEFCAKTKTLSSISPPSSAESLDLGFSSCGTPLHDQGGPVEILPFLYLGSAYHAARRDMLDALGITALLNVSSDCPNHFEGHYQYKCIPVEDNHKADISSWFMEAIEYIDSVKECCGRVLVHCQAGISRSATICLAYLMMKKRVKLEKAFEFVKQRRSIISPNFSFMGQLLQFESQVLATSCAVEAASPSGTLRERGKATSTPTSQFVFSFPVSVGVHATPSSLPYLHSPITTSPSC.

One can recognise a Rhodanese domain in the interval 25 to 143 (SGGRCLLLDC…FASEYPEFCA (119 aa)). Residues 176 to 317 (GPVEILPFLY…LLQFESQVLA (142 aa)) enclose the Tyrosine-protein phosphatase domain. Cys-261 functions as the Phosphocysteine intermediate in the catalytic mechanism.

This sequence belongs to the protein-tyrosine phosphatase family. Non-receptor class dual specificity subfamily.

It localises to the nucleus. The catalysed reaction is O-phospho-L-tyrosyl-[protein] + H2O = L-tyrosyl-[protein] + phosphate. The enzyme catalyses O-phospho-L-seryl-[protein] + H2O = L-seryl-[protein] + phosphate. It carries out the reaction O-phospho-L-threonyl-[protein] + H2O = L-threonyl-[protein] + phosphate. Functionally, regulates mitogenic signal transduction by dephosphorylating both Thr and Tyr residues on MAP kinases ERK1 and ERK2. The polypeptide is Dual specificity protein phosphatase 4 (DUSP4) (Gallus gallus (Chicken)).